The following is a 98-amino-acid chain: UPF0235 protein Asuc_1977 (98 aa).

This sequence belongs to the UPF0235 family.

In Actinobacillus succinogenes (strain ATCC 55618 / DSM 22257 / CCUG 43843 / 130Z), this protein is UPF0235 protein Asuc_1977.